A 103-amino-acid polypeptide reads, in one-letter code: Leukocyte cysteine proteinase inhibitor 1 (103 aa).

Blocked amino end (Met); partial is present on M1. A disordered region spans residues 1–20 (MESEEMLAGGLTEPRPATPE). A Secondary area of contact motif is present at residues 51–55 (QVVAG).

Belongs to the cystatin family.

It localises to the cytoplasm. Functionally, potent inhibitor of cathepsins L and S, and papain. In Sus scrofa (Pig), this protein is Leukocyte cysteine proteinase inhibitor 1.